The sequence spans 284 residues: Acetylglutamate kinase (284 aa).

Residues 64 to 65 (GG), arginine 86, and asparagine 181 each bind substrate.

This sequence belongs to the acetylglutamate kinase family. ArgB subfamily.

It is found in the cytoplasm. The catalysed reaction is N-acetyl-L-glutamate + ATP = N-acetyl-L-glutamyl 5-phosphate + ADP. It functions in the pathway amino-acid biosynthesis; L-arginine biosynthesis; N(2)-acetyl-L-ornithine from L-glutamate: step 2/4. Its function is as follows. Catalyzes the ATP-dependent phosphorylation of N-acetyl-L-glutamate. This chain is Acetylglutamate kinase, found in Wolinella succinogenes (strain ATCC 29543 / DSM 1740 / CCUG 13145 / JCM 31913 / LMG 7466 / NCTC 11488 / FDC 602W) (Vibrio succinogenes).